A 338-amino-acid polypeptide reads, in one-letter code: Auxin-responsive protein IAA9 (338 aa).

Positions 1-25 (MSPEEELQSNVSVASSSPTSNCISR) are disordered. A compositionally biased stretch (low complexity) spans 9 to 21 (SNVSVASSSPTSN). The EAR-like (transcriptional repression) signature appears at 68 to 72 (LTLGL). Residues 150-186 (ATQSVTKKDVPQNIPKGQSSTTNNSSSPPAAKAQIVG) are disordered. Residues 168-180 (SSTTNNSSSPPAA) show a composition bias toward low complexity. In terms of domain architecture, PB1 spans 216–318 (ALFVKVSMDG…VCKKLKIMKG (103 aa)).

The protein belongs to the Aux/IAA family. In terms of assembly, homodimers and heterodimers. Interacts with TPL. In terms of processing, phosphorylated by phytochrome A in vitro. As to expression, highly expressed in the whole plant.

It localises to the nucleus. Its function is as follows. Aux/IAA proteins are short-lived transcriptional factors that function as repressors of early auxin response genes at low auxin concentrations. Repression is thought to result from the interaction with auxin response factors (ARFs), proteins that bind to the auxin-responsive promoter element (AuxRE). Formation of heterodimers with ARF proteins may alter their ability to modulate early auxin response genes expression. This chain is Auxin-responsive protein IAA9 (IAA9), found in Arabidopsis thaliana (Mouse-ear cress).